A 458-amino-acid chain; its full sequence is Elongation factor 1-alpha (458 aa).

Glycine 2 carries the n,N,N-trimethylglycine modification. Residue lysine 3 is modified to N6,N6-dimethyllysine; alternate. Lysine 3 carries the N6-methyllysine; alternate modification. A tr-type G domain is found at 5–240 (KTHVNVVVIG…DAIEPPQRPT (236 aa)). Residues 14–21 (GHVDSGKS) form a G1 region. 14-21 (GHVDSGKS) is a binding site for GTP. Lysine 30 is modified (N6-methyllysine). Residues 70–74 (GITID) form a G2 region. Lysine 79 bears the N6,N6,N6-trimethyllysine mark. A G3 region spans residues 91-94 (DAPG). GTP contacts are provided by residues 91–95 (DAPGH) and 153–156 (NKMD). The segment at 153 to 156 (NKMD) is G4. Positions 192–194 (SGW) are G5. Lysine 316 carries the post-translational modification N6,N6-dimethyllysine; alternate. Position 316 is an N6-methyllysine; alternate (lysine 316). Residue lysine 390 is modified to N6-methyllysine.

Belongs to the TRAFAC class translation factor GTPase superfamily. Classic translation factor GTPase family. EF-Tu/EF-1A subfamily.

It is found in the cytoplasm. Its pathway is protein biosynthesis; polypeptide chain elongation. Its function is as follows. This protein promotes the GTP-dependent binding of aminoacyl-tRNA to the A-site of ribosomes during protein biosynthesis. This chain is Elongation factor 1-alpha (TEF1), found in Meyerozyma guilliermondii (strain ATCC 6260 / CBS 566 / DSM 6381 / JCM 1539 / NBRC 10279 / NRRL Y-324) (Yeast).